Here is a 358-residue protein sequence, read N- to C-terminus: Ion-translocating oxidoreductase complex subunit D (358 aa).

4 consecutive transmembrane segments (helical) span residues 19 to 39 (IMLW…YYFG), 41 to 61 (GVLL…FIAI), 79 to 99 (LTAL…VIII), and 125 to 145 (IGYV…MPPI). T186 bears the FMN phosphoryl threonine mark. Helical transmembrane passes span 220–240 (FAQG…FLIL), 248–268 (IPVA…FTGF), 271–291 (LSAI…FIAT), 297–317 (SITP…VYLI), and 321–341 (GNYP…VPLI).

It belongs to the NqrB/RnfD family. As to quaternary structure, the complex is composed of six subunits: RnfA, RnfB, RnfC, RnfD, RnfE and RnfG. FMN is required as a cofactor.

The protein localises to the cell inner membrane. Functionally, part of a membrane-bound complex that couples electron transfer with translocation of ions across the membrane. The sequence is that of Ion-translocating oxidoreductase complex subunit D from Haemophilus influenzae (strain PittEE).